The chain runs to 638 residues: Threonine--tRNA ligase (638 aa).

The region spanning 1–61 is the TGS domain; the sequence is MPIITLPDGS…NKDSKVVIIT (61 aa). The catalytic stretch occupies residues 242–533; the sequence is DHRKLGKKHS…LIEQYEAKFP (292 aa). Residues Cys-333, His-384, and His-510 each coordinate Zn(2+).

It belongs to the class-II aminoacyl-tRNA synthetase family. In terms of assembly, homodimer. The cofactor is Zn(2+).

The protein resides in the cytoplasm. The catalysed reaction is tRNA(Thr) + L-threonine + ATP = L-threonyl-tRNA(Thr) + AMP + diphosphate + H(+). Functionally, catalyzes the attachment of threonine to tRNA(Thr) in a two-step reaction: L-threonine is first activated by ATP to form Thr-AMP and then transferred to the acceptor end of tRNA(Thr). Also edits incorrectly charged L-seryl-tRNA(Thr). The protein is Threonine--tRNA ligase of Prochlorococcus marinus (strain MIT 9301).